A 136-amino-acid polypeptide reads, in one-letter code: Glutamyl-tRNA(Gln) amidotransferase subunit C, mitochondrial (136 aa).

The transit peptide at 1–27 (MWARAVHLGLRAAARGRRGFTSKADPQ) directs the protein to the mitochondrion.

Belongs to the GatC family. As to quaternary structure, subunit of the heterotrimeric GatCAB amidotransferase (AdT) complex, composed of A (QRSL1), B (GATB) and C (GATC) subunits.

Its subcellular location is the mitochondrion. It carries out the reaction L-glutamyl-tRNA(Gln) + L-glutamine + ATP + H2O = L-glutaminyl-tRNA(Gln) + L-glutamate + ADP + phosphate + H(+). Its function is as follows. Allows the formation of correctly charged Gln-tRNA(Gln) through the transamidation of misacylated Glu-tRNA(Gln) in the mitochondria. The reaction takes place in the presence of glutamine and ATP through an activated gamma-phospho-Glu-tRNA(Gln). The chain is Glutamyl-tRNA(Gln) amidotransferase subunit C, mitochondrial from Bos taurus (Bovine).